The following is a 152-amino-acid chain: Transcriptional repressor NrdR (152 aa).

The segment at 3 to 34 (CAFCGNPDTQVIDSRVSEDGSSIRRRRRCPAC) is a zinc-finger region. The ATP-cone domain occupies 49 to 139 (PQVVKTAGHR…VYRSFQDISE (91 aa)).

Belongs to the NrdR family. The cofactor is Zn(2+).

Its function is as follows. Negatively regulates transcription of bacterial ribonucleotide reductase nrd genes and operons by binding to NrdR-boxes. In Chromobacterium violaceum (strain ATCC 12472 / DSM 30191 / JCM 1249 / CCUG 213 / NBRC 12614 / NCIMB 9131 / NCTC 9757 / MK), this protein is Transcriptional repressor NrdR.